Reading from the N-terminus, the 596-residue chain is Elongation factor 4 (596 aa).

Residues 2-184 form the tr-type G domain; sequence KNIRNFAIIA…SIVKYIPPPE (183 aa). GTP is bound by residues 14 to 19 and 131 to 134; these read DHGKST and NKID.

It belongs to the TRAFAC class translation factor GTPase superfamily. Classic translation factor GTPase family. LepA subfamily.

It is found in the cell inner membrane. The catalysed reaction is GTP + H2O = GDP + phosphate + H(+). In terms of biological role, required for accurate and efficient protein synthesis under certain stress conditions. May act as a fidelity factor of the translation reaction, by catalyzing a one-codon backward translocation of tRNAs on improperly translocated ribosomes. Back-translocation proceeds from a post-translocation (POST) complex to a pre-translocation (PRE) complex, thus giving elongation factor G a second chance to translocate the tRNAs correctly. Binds to ribosomes in a GTP-dependent manner. The sequence is that of Elongation factor 4 from Neorickettsia sennetsu (strain ATCC VR-367 / Miyayama) (Ehrlichia sennetsu).